Here is a 170-residue protein sequence, read N- to C-terminus: Adenine phosphoribosyltransferase (170 aa).

Belongs to the purine/pyrimidine phosphoribosyltransferase family. As to quaternary structure, homodimer.

Its subcellular location is the cytoplasm. The enzyme catalyses AMP + diphosphate = 5-phospho-alpha-D-ribose 1-diphosphate + adenine. It participates in purine metabolism; AMP biosynthesis via salvage pathway; AMP from adenine: step 1/1. Its function is as follows. Catalyzes a salvage reaction resulting in the formation of AMP, that is energically less costly than de novo synthesis. This Oceanobacillus iheyensis (strain DSM 14371 / CIP 107618 / JCM 11309 / KCTC 3954 / HTE831) protein is Adenine phosphoribosyltransferase.